A 362-amino-acid polypeptide reads, in one-letter code: Chorismate synthase (362 aa).

Residue Arg46 participates in NADP(+) binding. FMN is bound by residues 122-124, 238-239, Gly278, 293-297, and Arg319; these read RSS, NA, and KPTPS.

It belongs to the chorismate synthase family. As to quaternary structure, homotetramer. The cofactor is FMNH2.

It catalyses the reaction 5-O-(1-carboxyvinyl)-3-phosphoshikimate = chorismate + phosphate. It functions in the pathway metabolic intermediate biosynthesis; chorismate biosynthesis; chorismate from D-erythrose 4-phosphate and phosphoenolpyruvate: step 7/7. In terms of biological role, catalyzes the anti-1,4-elimination of the C-3 phosphate and the C-6 proR hydrogen from 5-enolpyruvylshikimate-3-phosphate (EPSP) to yield chorismate, which is the branch point compound that serves as the starting substrate for the three terminal pathways of aromatic amino acid biosynthesis. This reaction introduces a second double bond into the aromatic ring system. This is Chorismate synthase from Campylobacter jejuni (strain RM1221).